The chain runs to 283 residues: Protein/nucleic acid deglycase HchA (283 aa).

3 residues coordinate Zn(2+): His86, Glu91, and His123. Cys185 functions as the Nucleophile in the catalytic mechanism.

This sequence belongs to the peptidase C56 family. HchA subfamily. Homodimer.

It localises to the cytoplasm. The enzyme catalyses N(omega)-(1-hydroxy-2-oxopropyl)-L-arginyl-[protein] + H2O = lactate + L-arginyl-[protein] + H(+). The catalysed reaction is N(6)-(1-hydroxy-2-oxopropyl)-L-lysyl-[protein] + H2O = lactate + L-lysyl-[protein] + H(+). It carries out the reaction S-(1-hydroxy-2-oxopropyl)-L-cysteinyl-[protein] + H2O = lactate + L-cysteinyl-[protein] + H(+). It catalyses the reaction N(omega)-(1-hydroxy-2-oxoethyl)-L-arginyl-[protein] + H2O = L-arginyl-[protein] + glycolate + H(+). The enzyme catalyses N(6)-(1-hydroxy-2-oxoethyl)-L-lysyl-[protein] + H2O = glycolate + L-lysyl-[protein] + H(+). The catalysed reaction is S-(1-hydroxy-2-oxoethyl)-L-cysteinyl-[protein] + H2O = glycolate + L-cysteinyl-[protein] + H(+). It carries out the reaction N(2)-(1-hydroxy-2-oxopropyl)-dGTP + H2O = lactate + dGTP + H(+). It catalyses the reaction N(2)-(1-hydroxy-2-oxopropyl)-GTP + H2O = lactate + GTP + H(+). The enzyme catalyses N(2)-(1-hydroxy-2-oxopropyl)-GDP + H2O = lactate + GDP + H(+). The catalysed reaction is N(2)-(1-hydroxy-2-oxopropyl)-GMP + H2O = lactate + GMP + H(+). It carries out the reaction N(2)-(1-hydroxy-2-oxoethyl)-dGTP + H2O = dGTP + glycolate + H(+). It catalyses the reaction N(2)-(1-hydroxy-2-oxoethyl)-GTP + H2O = glycolate + GTP + H(+). The enzyme catalyses N(2)-(1-hydroxy-2-oxoethyl)-GDP + H2O = glycolate + GDP + H(+). The catalysed reaction is N(2)-(1-hydroxy-2-oxoethyl)-GMP + H2O = glycolate + GMP + H(+). It carries out the reaction an N(2)-(1-hydroxy-2-oxopropyl)-guanosine in RNA + H2O = a guanosine in RNA + lactate + H(+). It catalyses the reaction an N(2)-(1-hydroxy-2-oxopropyl)-2'-deoxyguanosine in DNA + H2O = a 2'-deoxyguanosine in DNA + lactate + H(+). The enzyme catalyses an N(2)-(1-hydroxy-2-oxoethyl)-guanosine in RNA + H2O = a guanosine in RNA + glycolate + H(+). The catalysed reaction is an N(2)-(1-hydroxy-2-oxoethyl)-2'-deoxyguanosine in DNA + H2O = a 2'-deoxyguanosine in DNA + glycolate + H(+). Functionally, protein and nucleotide deglycase that catalyzes the deglycation of the Maillard adducts formed between amino groups of proteins or nucleotides and reactive carbonyl groups of glyoxals. Thus, functions as a protein deglycase that repairs methylglyoxal- and glyoxal-glycated proteins, and releases repaired proteins and lactate or glycolate, respectively. Deglycates cysteine, arginine and lysine residues in proteins, and thus reactivates these proteins by reversing glycation by glyoxals. Acts on early glycation intermediates (hemithioacetals and aminocarbinols), preventing the formation of Schiff bases and advanced glycation endproducts (AGE). Also functions as a nucleotide deglycase able to repair glycated guanine in the free nucleotide pool (GTP, GDP, GMP, dGTP) and in DNA and RNA. Is thus involved in a major nucleotide repair system named guanine glycation repair (GG repair), dedicated to reversing methylglyoxal and glyoxal damage via nucleotide sanitization and direct nucleic acid repair. Plays an important role in protecting cells from carbonyl stress. This is Protein/nucleic acid deglycase HchA from Escherichia coli O157:H7.